Consider the following 389-residue polypeptide: Pyruvate synthase subunit PorA (389 aa).

In terms of assembly, heterotetramer of one alpha, one beta, one delta and one gamma chain.

It carries out the reaction 2 oxidized [2Fe-2S]-[ferredoxin] + pyruvate + CoA = 2 reduced [2Fe-2S]-[ferredoxin] + acetyl-CoA + CO2 + H(+). The sequence is that of Pyruvate synthase subunit PorA (porA) from Methanocaldococcus jannaschii (strain ATCC 43067 / DSM 2661 / JAL-1 / JCM 10045 / NBRC 100440) (Methanococcus jannaschii).